A 348-amino-acid polypeptide reads, in one-letter code: Anthranilate phosphoribosyltransferase (348 aa).

Residues glycine 87, 90–91 (GD), threonine 95, 97–100 (NIST), 115–123 (KHGNRSASG), and serine 127 contribute to the 5-phospho-alpha-D-ribose 1-diphosphate site. Glycine 87 contributes to the anthranilate binding site. Residue serine 99 participates in Mg(2+) binding. Position 118 (asparagine 118) interacts with anthranilate. Residue arginine 173 participates in anthranilate binding. The Mg(2+) site is built by aspartate 232 and glutamate 233.

It belongs to the anthranilate phosphoribosyltransferase family. As to quaternary structure, homodimer. It depends on Mg(2+) as a cofactor.

It catalyses the reaction N-(5-phospho-beta-D-ribosyl)anthranilate + diphosphate = 5-phospho-alpha-D-ribose 1-diphosphate + anthranilate. Its pathway is amino-acid biosynthesis; L-tryptophan biosynthesis; L-tryptophan from chorismate: step 2/5. Functionally, catalyzes the transfer of the phosphoribosyl group of 5-phosphorylribose-1-pyrophosphate (PRPP) to anthranilate to yield N-(5'-phosphoribosyl)-anthranilate (PRA). The sequence is that of Anthranilate phosphoribosyltransferase from Synechococcus sp. (strain WH7803).